A 539-amino-acid polypeptide reads, in one-letter code: Glucans biosynthesis protein D (539 aa).

The tat-type signal signal peptide spans 1 to 29 (MNRRNLLKASMALAAYGSVSASGLYAARA).

Belongs to the OpgD/OpgG family. In terms of processing, predicted to be exported by the Tat system. The position of the signal peptide cleavage has not been experimentally proven.

Its subcellular location is the periplasm. It functions in the pathway glycan metabolism; osmoregulated periplasmic glucan (OPG) biosynthesis. Its function is as follows. Probably involved in the control of the structural glucose backbone of osmoregulated periplasmic glucans (OPGs). The chain is Glucans biosynthesis protein D from Pseudomonas savastanoi pv. phaseolicola (strain 1448A / Race 6) (Pseudomonas syringae pv. phaseolicola (strain 1448A / Race 6)).